The sequence spans 344 residues: AA9 family lytic polysaccharide monooxygenase cel61A (344 aa).

Residues 1-21 form the signal peptide; sequence MIQKLSNLLVTALAVATGVVG. Residue His-22 participates in Cu(2+) binding. 2 disulfides stabilise this stretch: Cys-77–Cys-198 and Cys-118–Cys-122. Asn-80 carries N-linked (GlcNAc...) asparagine glycosylation. His-107 is a Cu(2+) binding site. Asn-158 carries N-linked (GlcNAc...) asparagine glycosylation. Residues His-184 and Gln-193 each contribute to the O2 site. Tyr-195 provides a ligand contact to Cu(2+). A disordered region spans residues 262 to 310; sequence ATASATVPGGGSGPTSRTTTTARTTQASSRPSSTPPATTSAPAGGPTQT. Residues 275-310 show a composition bias toward low complexity; it reads PTSRTTTTARTTQASSRPSSTPPATTSAPAGGPTQT. The 37-residue stretch at 307 to 343 folds into the CBM1 domain; that stretch reads PTQTLYGQCGGSGYSGPTRCAPPATCSTLNPYYAQCL.

The protein belongs to the polysaccharide monooxygenase AA9 family. It depends on Cu(2+) as a cofactor.

The protein resides in the secreted. It carries out the reaction [(1-&gt;4)-beta-D-glucosyl]n+m + reduced acceptor + O2 = 4-dehydro-beta-D-glucosyl-[(1-&gt;4)-beta-D-glucosyl]n-1 + [(1-&gt;4)-beta-D-glucosyl]m + acceptor + H2O.. In terms of biological role, lytic polysaccharide monooxygenase (LPMO) that depolymerizes crystalline and amorphous polysaccharides via the oxidation of scissile alpha- or beta-(1-4)-glycosidic bonds, yielding C1 or C4 oxidation products. Catalysis by LPMOs requires the reduction of the active-site copper from Cu(II) to Cu(I) by a reducing agent and H(2)O(2) or O(2) as a cosubstrate. Shows activity on beta-glucan and amorphous cellulose. Does not show beta-1-3-glucanase, beta-1,6-glucanase, mannanase, xylanase, beta-1,3-galactosidase, amylase, pectinase, nor chitinase activities. The chain is AA9 family lytic polysaccharide monooxygenase cel61A from Hypocrea jecorina (Trichoderma reesei).